Reading from the N-terminus, the 270-residue chain is Cell division protein DivIB (270 aa).

Residues 1-28 (MAENKRVISIENRIPELKKYRKKKLVRH) are Cytoplasmic-facing. A helical transmembrane segment spans residues 29–49 (LAILIGIFVILIAITLYFLSP). Topologically, residues 50 to 270 (LSKLDKIAVS…AAKEKKETNE (221 aa)) are extracellular. The 69-residue stretch at 51-119 (SKLDKIAVSG…NDVQINITEF (69 aa)) folds into the POTRA domain.

Belongs to the FtsQ/DivIB family. DivIB subfamily.

It is found in the cell membrane. Its function is as follows. Cell division protein that may be involved in stabilizing or promoting the assembly of the division complex. This Listeria monocytogenes serovar 1/2a (strain ATCC BAA-679 / EGD-e) protein is Cell division protein DivIB.